Here is a 471-residue protein sequence, read N- to C-terminus: 5-hydroxytryptamine receptor 2B (471 aa).

At 1 to 26 (MFQAAVGPLQTNISLPEETPGLELNW) the chain is on the extracellular side. N12 carries an N-linked (GlcNAc...) asparagine glycan. The helical transmembrane segment at 27-49 (AALLIVMVIIPTIGGNILVILAV) threads the bilayer. The Cytoplasmic portion of the chain corresponds to 50-60 (WLEKKLQNATN). Residues 61-83 (FFLMSLAVADLLVGLLVMPIALI) form a helical membrane-spanning segment. Residues 84-99 (TILYDSDWPLPEPLCP) lie on the Extracellular side of the membrane. C98 and C182 form a disulfide bridge. Residues 100–121 (IWLFLDVLFSTASIMHLCAISL) traverse the membrane as a helical segment. Ergotamine contacts are provided by D105 and T110. Residues 122–124 (DRY) carry the DRY motif; important for ligand-induced conformation changes motif. Over 122–141 (DRYIAIKKPIQHSQYKSRAK) the chain is Cytoplasmic. Residues 142–162 (VMLKIALVWLISICIAIPIPI) traverse the membrane as a helical segment. Over 163-191 (KGLRNYPHPNNITFTSNHTCVLKTDTFQE) the chain is Extracellular. N173 and N179 each carry an N-linked (GlcNAc...) asparagine glycan. Residue L184 coordinates ergotamine. A [DE]RFG motif; may stabilize a conformation that preferentially activates signaling via beta-arrestin family members motif is present at residues 187–190 (DTFQ). A helical transmembrane segment spans residues 192 to 214 (FIIFGSLVAFFIPLTIMMIIYFL). The Cytoplasmic segment spans residues 215–308 (TVRVLRKKVY…TLTNEQRASK (94 aa)). The helical transmembrane segment at 309 to 329 (VLGIVFLLFVVMWCPFFITNI) threads the bilayer. The Extracellular portion of the chain corresponds to 330–344 (TSALCGPCDANIIGR). A disulfide bridge links C334 with C337. A helical transmembrane segment spans residues 345 to 366 (LMEIFSWVGYVSSGINPLVYTL). An NPxxY motif; important for ligand-induced conformation changes and signaling motif is present at residues 360-364 (NPLVY). Residues 367–471 (FNKTFRQAFT…CKQEERVSCV (105 aa)) lie on the Cytoplasmic side of the membrane. C381 carries S-palmitoyl cysteine lipidation. The PDZ-binding motif lies at 469 to 471 (SCV).

This sequence belongs to the G-protein coupled receptor 1 family. In terms of tissue distribution, detected in brain, heart and gut.

Its subcellular location is the cell membrane. The protein resides in the synapse. It localises to the synaptosome. In terms of biological role, G-protein coupled receptor for 5-hydroxytryptamine (serotonin). Also functions as a receptor for various ergot alkaloid derivatives and psychoactive substances. Ligand binding causes a conformation change that triggers signaling via guanine nucleotide-binding proteins (G proteins) and modulates the activity of downstream effectors. HTR2B is coupled to G(q)/G(11) G alpha proteins and activates phospholipase C-beta, releasing diacylglycerol (DAG) and inositol 1,4,5-trisphosphate (IP3) second messengers that modulate the activity of phosphatidylinositol 3-kinase and promote the release of Ca(2+) ions from intracellular stores, respectively. Beta-arrestin family members inhibit signaling via G proteins and mediate activation of alternative signaling pathways. Plays a role in the regulation of dopamine and 5-hydroxytryptamine release, 5-hydroxytryptamine uptake and in the regulation of extracellular dopamine and 5-hydroxytryptamine levels, and thereby affects neural activity. In Dichotomyctere fluviatilis (Green pufferfish), this protein is 5-hydroxytryptamine receptor 2B (htr2b).